A 1464-amino-acid chain; its full sequence is Glutamate receptor ionotropic, NMDA 2A (1464 aa).

An N-terminal signal peptide occupies residues 1 to 22 (MGRVGYWTLLVLPALLVWRGPA). The Extracellular segment spans residues 23-556 (PSAAAEKGPP…SAFLEPFSAS (534 aa)). His44 is a Zn(2+) binding site. Residue Asn75 is glycosylated (N-linked (GlcNAc...) asparagine). An intrachain disulfide couples Cys87 to Cys320. Zn(2+) contacts are provided by His128, Glu266, and Asp282. Residues Asn340, Asn380, Asn443, and Asn444 are each glycosylated (N-linked (GlcNAc...) asparagine). Cystine bridges form between Cys429–Cys455 and Cys436–Cys456. L-glutamate-binding residues include Ser511, Thr513, and Arg518. Asn541 carries an N-linked (GlcNAc...) asparagine glycan. Residues 557–576 (VWVMMFVMLLIVSAIAVFVF) form a helical membrane-spanning segment. The Cytoplasmic segment spans residues 577–600 (EYFSPVGYNRNLAKGKAPHGPSFT). The tract at residues 599-620 (FTIGKAIWLLWGLVFNNSVPVQ) is pore-forming. The discontinuously helical intramembrane region spans 601–615 (IGKAIWLLWGLVFNN). The Cytoplasmic segment spans residues 616-625 (SVPVQNPKGT). A helical membrane pass occupies residues 626-646 (TSKIMVSVWAFFAVIFLASYT). Topologically, residues 647 to 814 (ANLAAFMIQE…NEVMSSQLDI (168 aa)) are extracellular. Asn687 carries N-linked (GlcNAc...) asparagine glycosylation. L-glutamate is bound by residues Ser689, Thr690, and Asp731. Cys745 and Cys800 are oxidised to a cystine. A helical transmembrane segment spans residues 815–835 (DNMAGVFYMLAAAMALSLITF). Over 836-1464 (IWEHLFYWKL…KKMPSIESDV (629 aa)) the chain is Cytoplasmic. Residues Ser882, Ser890, and Ser929 each carry the phosphoserine modification. 2 stretches are compositionally biased toward polar residues: residues 1001–1010 (STESKVNSRP) and 1023–1032 (QDSLSQNPVS). Disordered regions lie at residues 1001–1088 (STES…NFKR) and 1148–1180 (PDPY…GLSN). Ser1025 is subject to Phosphoserine. 2 stretches are compositionally biased toward basic and acidic residues: residues 1033–1043 (QRDEATAENRT) and 1052–1061 (LPEEMAHSDI). Phosphoserine is present on residues Ser1059 and Ser1062. The span at 1070 to 1087 (CHREPDNSKNPKTKDNFK) shows a compositional bias: basic and acidic residues. The segment covering 1165–1180 (LPMNRNPLQNEEGLSN) has biased composition (polar residues). Phosphoserine occurs at positions 1198 and 1291. The tract at residues 1335–1372 (KLSGKKSSLFPQGLEDSKRSKSLLPDHTSDNPFLHSHR) is disordered. Positions 1462 to 1464 (SDV) match the PDZ-binding motif.

This sequence belongs to the glutamate-gated ion channel (TC 1.A.10.1) family. NR2A/GRIN2A subfamily. In terms of assembly, heterotetramer. Forms heterotetrameric channels composed of two GluN1/zeta subunits (GRIN1), and two identical GluN2/epsilon subunits (GRIN2A, GRIN2B, GRIN2C or GRIN2D) or GluN3 subunits (GRIN3A or GRIN3B) (in vitro). Can also form heterotetrameric channels that contain at least two GluN1 subunits and at least two different GluN2 subunits (or a combination of one GluN2 and one GluN3 subunits) (in vitro). In vivo, the subunit composition may depend on the expression levels of the different subunits. Found in a complex with GRIN1, GRIN3A and PPP2CB. Found in a complex with GRIN1 and GRIN3B. Interacts with AIP1. Interacts with HIP1 and NETO1. Interacts with SNX27 (via PDZ domain); the interaction is required for recycling to the plasma membrane when endocytosed and prevent degradation in lysosomes. Interacts with PDZ domains of PATJ and DLG4. Interacts with LRFN2. Interacts with RPH3A and DLG4; this ternary complex regulates NMDA receptor composition at postsynaptic membranes. Interacts with SORCS2. Interacts with ARC; preventing ARC oligomerization. Interacts (via the extreme C-terminus) with FRMPD2 (the second PDZ domain); the interaction is direct and is likely to promote NMDAR-mediated neural signal transmission. GRIN2A binds FRMPD2 with lower affinity than GRIN2B.

Its subcellular location is the cell projection. It is found in the dendritic spine. The protein resides in the cell membrane. The protein localises to the synapse. It localises to the postsynaptic cell membrane. Its subcellular location is the cytoplasmic vesicle membrane. The catalysed reaction is Ca(2+)(in) = Ca(2+)(out). The enzyme catalyses Na(+)(in) = Na(+)(out). It carries out the reaction K(+)(in) = K(+)(out). In terms of biological role, component of N-methyl-D-aspartate (NMDA) receptors (NMDARs) that function as heterotetrameric, ligand-gated cation channels with high calcium permeability and voltage-dependent block by Mg(2+). NMDARs participate in synaptic plasticity for learning and memory formation by contributing to the slow phase of excitatory postsynaptic current, long-term synaptic potentiation, and learning. Channel activation requires binding of the neurotransmitter L-glutamate to the GluN2 subunit, glycine or D-serine binding to the GluN1 subunit, plus membrane depolarization to eliminate channel inhibition by Mg(2+). NMDARs mediate simultaneously the potasium efflux and the influx of calcium and sodium. Each GluN2 subunit confers differential attributes to channel properties, including activation, deactivation and desensitization kinetics, pH sensitivity, Ca2(+) permeability, and binding to allosteric modulators. Participates in the synaptic plasticity regulation through activation by the L-glutamate releaseed by BEST1, into the synaptic cleft, upon F2R/PAR-1 activation in astrocyte. The polypeptide is Glutamate receptor ionotropic, NMDA 2A (Pan troglodytes (Chimpanzee)).